Here is a 498-residue protein sequence, read N- to C-terminus: ATP synthase subunit beta, chloroplastic (498 aa).

Gly-172 to Thr-179 is an ATP binding site.

This sequence belongs to the ATPase alpha/beta chains family. As to quaternary structure, F-type ATPases have 2 components, CF(1) - the catalytic core - and CF(0) - the membrane proton channel. CF(1) has five subunits: alpha(3), beta(3), gamma(1), delta(1), epsilon(1). CF(0) has four main subunits: a(1), b(1), b'(1) and c(9-12).

It localises to the plastid. It is found in the chloroplast thylakoid membrane. It carries out the reaction ATP + H2O + 4 H(+)(in) = ADP + phosphate + 5 H(+)(out). Produces ATP from ADP in the presence of a proton gradient across the membrane. The catalytic sites are hosted primarily by the beta subunits. The protein is ATP synthase subunit beta, chloroplastic of Nicotiana tabacum (Common tobacco).